Reading from the N-terminus, the 375-residue chain is POU domain, class 3, transcription factor 1-A (375 aa).

Disordered regions lie at residues methionine 1–glutamine 29, proline 67–leucine 138, and methionine 151–aspartate 200. Composition is skewed to polar residues over residues valine 107 to tryptophan 117, serine 129 to leucine 138, and methionine 151 to histidine 160. The span at serine 162–glutamine 177 shows a compositional bias: basic and acidic residues. The POU-specific domain maps to glutamate 194–aspartate 268. A DNA-binding region (homeobox) is located at residues lysine 286–threonine 345.

Belongs to the POU transcription factor family. Class-3 subfamily. As to expression, in embryos at the neural fold stage, localized primarily in the anterior neural plate, and localized mostly in the anterior region of the nerve cord of neurula stage embryos. In tailbud stages, expressed predominantly in the eye and brain, with weak expression along the length of the nerve cord. In adults, expressed in skin and brain.

It localises to the nucleus. In terms of biological role, acts as a transcription factor. May play a role in neuronal differentiation. This is POU domain, class 3, transcription factor 1-A (pou3f1-a) from Xenopus laevis (African clawed frog).